A 231-amino-acid polypeptide reads, in one-letter code: Ribonuclease HII (231 aa).

The 190-residue stretch at 33-222 (WPVAGADEAG…FREAQEQPLA (190 aa)) folds into the RNase H type-2 domain. A divalent metal cation is bound by residues D39, E40, and D130.

It belongs to the RNase HII family. Requires Mn(2+) as cofactor. It depends on Mg(2+) as a cofactor.

The protein localises to the cytoplasm. It carries out the reaction Endonucleolytic cleavage to 5'-phosphomonoester.. Its function is as follows. Endonuclease that specifically degrades the RNA of RNA-DNA hybrids. The sequence is that of Ribonuclease HII from Sinorhizobium fredii (strain NBRC 101917 / NGR234).